Here is a 295-residue protein sequence, read N- to C-terminus: Zinc finger CCCH domain-containing protein 44 (295 aa).

The segment at 1-31 (MEAGGGKRAAPEGTNGAAKRARASESSQVGV) is disordered. 2 C3H1-type zinc fingers span residues 32-60 (GSKL…HNFP) and 98-126 (SVKT…HGER). The KH domain occupies 166–230 (SATAKISVDA…DQIKHASAMV (65 aa)). A C3H1-type 3 zinc finger spans residues 259–286 (NFKTKLCENFNKGSCTFGDRCHFAHGES).

The chain is Zinc finger CCCH domain-containing protein 44 from Oryza sativa subsp. japonica (Rice).